We begin with the raw amino-acid sequence, 483 residues long: Phosphoglucosamine mutase (483 aa).

Residue Ser131 is the Phosphoserine intermediate of the active site. Mg(2+) is bound by residues Ser131, Asp272, Asp274, and Asp276. Phosphoserine is present on Ser131.

This sequence belongs to the phosphohexose mutase family. Mg(2+) serves as cofactor. Activated by phosphorylation.

The catalysed reaction is alpha-D-glucosamine 1-phosphate = D-glucosamine 6-phosphate. Functionally, catalyzes the conversion of glucosamine-6-phosphate to glucosamine-1-phosphate. The chain is Phosphoglucosamine mutase from Magnetococcus marinus (strain ATCC BAA-1437 / JCM 17883 / MC-1).